A 400-amino-acid polypeptide reads, in one-letter code: Elongation factor Tu-B (400 aa).

Residues 10 to 209 form the tr-type G domain; it reads KPHVNVGTIG…VVDEYIPTPE (200 aa). Positions 19–26 are G1; the sequence is GHVDHGKT. 19 to 26 provides a ligand contact to GTP; it reads GHVDHGKT. T26 provides a ligand contact to Mg(2+). A G2 region spans residues 60 to 64; the sequence is GITIN. Residues 81-84 form a G3 region; it reads DCPG. Residues 81-85 and 136-139 contribute to the GTP site; these read DCPGH and NKAD. A G4 region spans residues 136–139; that stretch reads NKAD. Positions 174-176 are G5; it reads SAL.

It belongs to the TRAFAC class translation factor GTPase superfamily. Classic translation factor GTPase family. EF-Tu/EF-1A subfamily. As to quaternary structure, monomer.

Its subcellular location is the cytoplasm. The catalysed reaction is GTP + H2O = GDP + phosphate + H(+). Functionally, GTP hydrolase that promotes the GTP-dependent binding of aminoacyl-tRNA to the A-site of ribosomes during protein biosynthesis. This chain is Elongation factor Tu-B, found in Caldanaerobacter subterraneus subsp. tengcongensis (strain DSM 15242 / JCM 11007 / NBRC 100824 / MB4) (Thermoanaerobacter tengcongensis).